A 394-amino-acid polypeptide reads, in one-letter code: NAD(P)H-quinone oxidoreductase subunit H (394 aa).

It belongs to the complex I 49 kDa subunit family. NDH-1 can be composed of about 15 different subunits; different subcomplexes with different compositions have been identified which probably have different functions.

Its subcellular location is the cellular thylakoid membrane. The enzyme catalyses a plastoquinone + NADH + (n+1) H(+)(in) = a plastoquinol + NAD(+) + n H(+)(out). It catalyses the reaction a plastoquinone + NADPH + (n+1) H(+)(in) = a plastoquinol + NADP(+) + n H(+)(out). Functionally, NDH-1 shuttles electrons from an unknown electron donor, via FMN and iron-sulfur (Fe-S) centers, to quinones in the respiratory and/or the photosynthetic chain. The immediate electron acceptor for the enzyme in this species is believed to be plastoquinone. Couples the redox reaction to proton translocation, and thus conserves the redox energy in a proton gradient. Cyanobacterial NDH-1 also plays a role in inorganic carbon-concentration. This is NAD(P)H-quinone oxidoreductase subunit H from Microcystis aeruginosa (strain NIES-843 / IAM M-2473).